Consider the following 871-residue polypeptide: MMQFQRDLEASLEAVSANAQELLKSLKSRKDVQDLNASLPKDPLDNCDAQTQAARAQLAEAATRILQLSIRPQEYLEHLQNGYQHLTCFRWLVELNILDHLPHSGTISYTDLARKASVPPMQLRSICRMAICNGFLEEPEANQVRHSRISALFARDESYLGWARWMVNYSVPAAYKLSDATRSWGETVAKDQTAFNLGMDVKVPFFDHLRQTPAMKDAFAAYMRNVTSNATWGLQHAVTGFDWASLPRGAKVVDVGGSLGHGSIAIAKEHTHLTFVIQDLPETVAGARKEMAQNDKIEASVKSRITFQEHDFFGPQTVKDADVYFLRMICHDWPDNEAKVILSQIRAALKPGAQIVIMDTILPQPGTISVLQEQQLRIRDLTMMEVFNAKERELEDWSSLMQSAGLEISRVNQPLNSVMGLLTVRSAGQTALSGTNTLTPELVAAVSASTGSADSRPVLIAGAGIAGLCLAQALKKAGIDFRVFERDSHIDARPQGYRLKFEADAAQSLKNILPDDVYEAFELSNAVTAVGETDFNPFNGNIIHSRTGGGLSGKKGLYATFTVDRKAFRTQLMTGIEDKISFGKEIAYYKTDDATSTVNAEFKDGTHVTGSFLAGTDGLHSVVRKTCVPNHRIVDTGAACIYGKTVMTPEFLARFPEKGLRFMTVVSDIAPMLQSCLIGDSPVTLLLEPIRFSEASRARYPELPPDYVYWALIGPKERFGSQEVTSMKNFVSLDQAAEQAAKLSLAVTEEWHPSLRALFELQDTKQASLIRVASTIPDIPSWESHSNVTVLGGSIHPMSPCGGVGANTAIVDADALAKVLVEHGTKPPVNAIAEFGAAMRTRAKRNIWRSEVGSKRMFGQKNLVDCSEFVF.

An O-methyltransferase region spans residues 1 to 429 (MMQFQRDLEA…GLLTVRSAGQ (429 aa)). Aspartate 279 contributes to the S-adenosyl-L-methionine binding site. The active-site Proton acceptor is histidine 331. Residues 430-871 (TALSGTNTLT…NLVDCSEFVF (442 aa)) are FAD-dependent monooxygenase. Positions 485, 569, and 806 each coordinate FAD.

The protein in the C-terminal section; belongs to the paxM FAD-dependent monooxygenase family. This sequence in the N-terminal section; belongs to the class I-like SAM-binding methyltransferase superfamily. Cation-independent O-methyltransferase family. COMT subfamily.

The catalysed reaction is nor-toralactone + S-adenosyl-L-methionine = toralactone + S-adenosyl-L-homocysteine + H(+). It carries out the reaction toralactone + NADH + O2 + H(+) = 1-(3,4,5-trihydroxy-7-methoxynaphthalen-2-yl)propan-2-one + CO2 + NAD(+). The protein operates within mycotoxin biosynthesis. In terms of biological role, dual O-methyltransferase/FAD-dependent monooxygenase; part of the gene cluster that mediates the biosynthesis of cercosporin, a light-activated, non-host-selective toxin. The perylenequinone chromophore of cercosporin absorbs light energy to attain an electronically-activated triplet state and produces active oxygen species such as the hydroxyl radical, superoxide, hydrogen peroxide or singlet oxygen upon reaction with oxygen molecules. These reactive oxygen species cause damage to various cellular components including lipids, proteins and nucleic acids. The first step of cercosporin biosynthesis is performed by the polyketide synthase CTB1 which catalyzes the formation of nor-toralactone. The starter unit acyltransferase (SAT) domain of CTB1 initiates polyketide extension by the selective utilization of acetyl-CoA, which is elongated to the heptaketide in the beta-ketoacyl synthase (KS) domain by successive condensations with six malonyl units introduced by the malonyl acyltransferase (MAT) domain. The product template (PT) domain catalyzes C4-C9 and C2-C11 aldol cyclizations and dehydrations to a trihydroxynaphthalene, which is thought to be delivered to the thioesterase (TE) domain for product release. The bifunctional enzyme CTB3 then methylates nor-toralactone to toralactone before conducting an unusual oxidative aromatic ring opening. The O-methyltransferase CTB2 further methylates the nascent OH-6 of the CBT3 product, blocking further oxidation at this site before the reductase CTB6 reduces the 2-oxopropyl ketone at position C7, giving naphthalene. The FAD-dependent monooxygenase CTB5 in concert with the multicopper oxidase CTB12 are responsible for homodimerization of naphthalene with CTB7 installing the dioxepine moiety, finally producing cercosporin. The fasciclin domain-containing protein CTB11 might act with CTB5 and CTB12 whereas the roles of CTB9 and CTB10 have still to be elucidated. The sequence is that of Dual O-methyltransferase/FAD-dependent monooxygenase CTB3 from Cercospora nicotianae (Barn spot disease fungus).